A 199-amino-acid polypeptide reads, in one-letter code: NAD(P)H dehydrogenase (quinone) (199 aa).

In terms of domain architecture, Flavodoxin-like spans 4–190 (VLVLYYSAYG…NGARYQGRTI (187 aa)). FMN-binding positions include 10–15 (SAYGHI) and 78–80 (TRF). Position 12 (Y12) interacts with NAD(+). Residue W98 coordinates substrate. FMN contacts are provided by residues 113-119 (STATQHG) and H134.

It belongs to the WrbA family. FMN is required as a cofactor.

It catalyses the reaction a quinone + NADH + H(+) = a quinol + NAD(+). It carries out the reaction a quinone + NADPH + H(+) = a quinol + NADP(+). The protein is NAD(P)H dehydrogenase (quinone) of Afipia carboxidovorans (strain ATCC 49405 / DSM 1227 / KCTC 32145 / OM5) (Oligotropha carboxidovorans).